Reading from the N-terminus, the 608-residue chain is Probable potassium transport system protein Kup (608 aa).

The next 12 helical transmembrane spans lie at 9–29 (LSGV…TSPL), 46–66 (PAAI…VVSV), 99–119 (TPVL…EVVI), 137–157 (PSLD…LFAI), 165–185 (VGKL…VLGL), 213–233 (TSFF…ALYA), 247–267 (WFVV…ALLL), 285–305 (ALLP…QAVI), 337–357 (IYIP…IMSF), 363–383 (LAAA…ILFC), 396–416 (LVAA…AANL), and 419–439 (IFSG…LMTS).

It belongs to the HAK/KUP transporter (TC 2.A.72) family.

Its subcellular location is the cell inner membrane. It carries out the reaction K(+)(in) + H(+)(in) = K(+)(out) + H(+)(out). Functionally, transport of potassium into the cell. Likely operates as a K(+):H(+) symporter. The chain is Probable potassium transport system protein Kup from Aeromonas salmonicida (strain A449).